Reading from the N-terminus, the 1083-residue chain is RecBCD enzyme subunit RecB (1083 aa).

One can recognise a UvrD-like helicase ATP-binding domain in the interval 1-323 (MKVFDLLGPL…QTLGTNWRSD (323 aa)). The DNA-binding and helicase activity, interacts with RecC stretch occupies residues 1 to 704 (MKVFDLLGPL…RGRAPGEAIV (704 aa)). 21–28 (ASAGTGKT) is a binding site for ATP. In terms of domain architecture, UvrD-like helicase C-terminal spans 349–607 (VQARHQGHRL…QIMTVWVSKG (259 aa)). Residues 765–1083 (AWKRTSYSGL…LSKLLDAEAP (319 aa)) form a nuclease activity, interacts with RecD and RecA region. Mg(2+) contacts are provided by His830, Asp962, and Asp975. Asp975 (for nuclease activity) is an active-site residue.

The protein belongs to the helicase family. UvrD subfamily. Heterotrimer of RecB, RecC and RecD. All subunits contribute to DNA-binding. Interacts with RecA. The cofactor is Mg(2+).

The enzyme catalyses Exonucleolytic cleavage (in the presence of ATP) in either 5'- to 3'- or 3'- to 5'-direction to yield 5'-phosphooligonucleotides.. It catalyses the reaction Couples ATP hydrolysis with the unwinding of duplex DNA by translocating in the 3'-5' direction.. It carries out the reaction ATP + H2O = ADP + phosphate + H(+). In terms of biological role, a helicase/nuclease that prepares dsDNA breaks (DSB) for recombinational DNA repair. Binds to DSBs and unwinds DNA via a highly rapid and processive ATP-dependent bidirectional helicase activity. Holoenzyme degrades any linearized DNA that is unable to undergo homologous recombination. In the holoenzyme this subunit contributes DNA-dependent ATPase activity, exonuclease activity and 3'-5' helicase activity. Unlike the case in E.coli, suppresses RecA-dependent homologous recombination, is instead required for single-strand annealing pathway repair of DSB. The protein is RecBCD enzyme subunit RecB of Mycolicibacterium smegmatis (strain ATCC 700084 / mc(2)155) (Mycobacterium smegmatis).